The chain runs to 2020 residues: MNSMNTYSPLYSSYENINIYKKNRKFEEDNYETSTANISCDSKGRILVKESENDRNESIQKKQMLSSMDNRKTNKSEKHNISSYYKMRKKASNHLKDKEKLNNNIIYAKNPHANRYDKYYSLNMNIMNNMNNMNNMNNVNNMNNVNNMNNVNNMNNMNNVNNMNNMNNVNNMNNVKSMYNNNNNSNVYYRISRQNINGKERLLNRYNIMRPQRSADMLIRNYLYNDLPYEINQQNLNKNINDNNAGSFDNLNKTVFENYNKNILDEYNRNIMQYYNSNLKNYRNSSFDNIYTRYNNNNNNNNVYSNNNVYSNNNIYNNNNNNDNINNSFQFSKQEGLMKIYSNNNRNMNDYVVKTSNITRAADNTCAQEQINIPTYNKTVLLKSSPNTENTFNKTLSNILKEQPKRSSMFSFNSSDFFKDFGKLRKNFVGKKKNKINKDIVINGNIFNNKIIDNNTSNAKSEGNSTLHKIYNFIFPSSVKKLQKKKQKLQVIEDKEKNSNRAVVMPLKNKIIYINDANITNDKFKHSFENYNYHQTNIPFVSVTNYMNKDSTKNVRSFSSFDVKERISPRVIRNGNINNNKNNNINNNNNNINNNNNNINNNNNNINNNNNINNNNNINNNNNINNNNNINNNNINNINNINNDFVNDSNINKTVNIHNNNNNLNNYSNTMKSVAKNTQKLSAQKNSLVNDKHHTYHEKLITNIYQFTGGQSQKSCNIKNQNVKEEKINNTQISYINNTAYNDYTNLPNVETYVLSEKSNNLENKEDNNINEKFKNDNNVDKKNNDENNIIKHNVNQNNNEVIVMNNQTEEQINDNKFIKPLNNITGIDPKKKNIYNTVMHINDKMDLNKHDYNYNYNNIIPHNYINSSDKMTNNSLHINKKADDIFQNMISNNDTNVPCVYVNKYINNIFQNNNPSNVTNYINTINMNKAPITIDENSNKLDNNINYENVTKNMIYNNYTNNNVLYITKEKSDNKLNNSTNHLNDLKNNYYVINPSLLYIHNNNNNIEWNKQYTNNFSKPNFLDKFFYEKKVESIQPHHLNQYYYNNQNVKYNPSHINILENKYVNQFTNQNENSLYNFTTHHNNIKNNNIDNILLLDKAIRNQSIYYNNNKGDDETKSAEHTTNPSINLLKNNYEDKNKSNYVHSIVSITDKDNSIYAKNKYAEVVTKNNEKREDAIHKKDEQYIFNNNDNNNDNIHNNNIHNNIHNNIHNNIHNNIHNNIHNNIHNNIHNNIHNNIHNNIHNNIDVSSRENFFQHDIQNTNQINNKTILDITQNEKPNATNEKCLDINNKEKKKKKIKSVHYDMDEILSLKCKVYDELDTCLKCINNLTKNKKLYEQLKKYKHKLDKDTKTKKLYDECTSEKTGSYYTMKDSYISSLLCNEYKLNHILNKSNNKVSDDKHILSYNHHHNKNNNINDINNIKHISKFVNKDNEKTLNNINILNHNNKDPNSGVFLPSDNTESVIYNMNRNRKLCDNNFNVSKHVLYKDSKGTDSTRTNFYDDYSMSYVKSNVDNVEKKEKIKNNINISDKYFLSETDSPYIGKKKALMITLNYNGLLEGCVNDTVDMCDHLMQRFGFNDFILLNDCNLCYRNFVTQKANKKNILSNLHNFIVNSNNGDILFFYFCGYSIKLIDSKFTENYNFALLPQDHSKNNYIYSNEIFNIIKKLQGGKQLCIIFDTTYTSYFVPVPTSITYNKNMNTTEIYKYNNFSSNQKYLKSLKTFGKIRDRNVDSIFVENIKKPLLYEIYKKENDTNTNDKIILVPSIFFFSPDCNDRNDFEFSIKNKVRGLLTYCLGKAIELLKNDFSYHDLFVAASQILIDIKKEYNLKYVKFKLSFLNEYSPDDIKFLSHESLFLKKKLQLDEPLWKPSLKLNNLNQYIQDICNMDERKMLKSSKKKCLLIFIKDIKFYTYKNIDTKNEYFVSCFIKNKNVNILCVRRNNTKEQRIVQDKIFFLEYITLNVTHMENANIYVELFKKKKKNYFVARSIFNIRNVNGKFSLSDEKKNIIGIIDLNIKCVS.

Composition is skewed to basic and acidic residues over residues 51 to 60 and 69 to 78; these read SENDRNESIQ and DNRKTNKSEK. Disordered regions lie at residues 51–78 and 573–614; these read SEND…KSEK and RNGN…NINN. Over residues 576–614 the composition is skewed to low complexity; the sequence is NINNNKNNNINNNNNNINNNNNNINNNNNNINNNNNINN.

It belongs to the peptidase C14B family.

Its subcellular location is the cytoplasm. Its activity is regulated as follows. Ca(2+) does not appear to affect catalytic activity. Its function is as follows. Protease that cleaves specifically after arginine or lysine residues. May play a role in parasite growth and/or development. The sequence is that of Metacaspase-2 from Plasmodium falciparum (isolate 3D7).